Here is a 432-residue protein sequence, read N- to C-terminus: MSGVVVVGAQWGDEGKGKLIDVFAEKADMVVRYQGGANAGHTLVVNGQKTVLHLVPSGILRPETTCVIASGVVIDVFSIRDEIKKLKDTGFLQNPKQLLISDTATLILPYHKALDAAREAALSDGKIGTTGKGIGPAYEDRASRRAILFGDLFDKDNLKKKLELALTEKNFMLENYYKGSTFKADDLIKDLLAVAEELAPYRTKDTSLFISKSLKSGKRVLFEGAQGTMLDILHGTYPFVTSSSTLASNACASAGIGPASVQKVIGVFKAYTTRVGSGPFPTELNDEIGKKIQADGHEFGSTTGRSRRCGWLDLVALKYAIRVNGITNLAMMKLDVLTGHDRIGVCTAYKLNGEIITDLPTSPYELEKVEPVIEWIPGWTQDLTKVKTLSDLPRPTTNYIDYLGSQLGTPIDVISVGPGREQTLWVKPLFNN.

Residues 12 to 18 and 40 to 42 contribute to the GTP site; these read GDEGKGK and GHT. D13 acts as the Proton acceptor in catalysis. D13 and G40 together coordinate Mg(2+). IMP contacts are provided by residues 13 to 16, 38 to 41, T130, R144, Q226, T241, and R305; these read DEGK and NAGH. The Proton donor role is filled by H41. 301-307 contacts substrate; that stretch reads STTGRSR. Residues R307, 333–335, and 415–417 contribute to the GTP site; these read KLD and SVG.

This sequence belongs to the adenylosuccinate synthetase family. As to quaternary structure, homodimer. The cofactor is Mg(2+).

Its subcellular location is the cytoplasm. It carries out the reaction IMP + L-aspartate + GTP = N(6)-(1,2-dicarboxyethyl)-AMP + GDP + phosphate + 2 H(+). The protein operates within purine metabolism; AMP biosynthesis via de novo pathway; AMP from IMP: step 1/2. Functionally, plays an important role in the de novo pathway of purine nucleotide biosynthesis. Catalyzes the first committed step in the biosynthesis of AMP from IMP. The polypeptide is Adenylosuccinate synthetase (Bdellovibrio bacteriovorus (strain ATCC 15356 / DSM 50701 / NCIMB 9529 / HD100)).